The chain runs to 540 residues: Hexose transporter HXT14 (540 aa).

At 1-56 (MTAQIPYQHSSGYISHFHNNELDAGRGRDYNVTIKYLDDKEENIEGQAAKISHNAS) the chain is on the cytoplasmic side. A helical transmembrane segment spans residues 57–76 (LHIPVLLCLVISLGGFIFGW). Over 77-119 (DIGTIGGMTNMVSFQEKFGTTNIIHDDETIFVSTKKLTDLQIG) the chain is Extracellular. Residues 120–140 (LIISIFNISCGVGALTLSKIG) traverse the membrane as a helical segment. Residues 141 to 146 (DWIGRK) are Cytoplasmic-facing. A helical transmembrane segment spans residues 147 to 167 (GGIWFALVVYCIGITIQILSY). Over 168–177 (GRWYFLTLGR) the chain is Extracellular. The chain crosses the membrane as a helical span at residues 178–198 (AVTGIGVGVTTVLVPMFLSEN). Topologically, residues 199 to 204 (SPLKIR) are cytoplasmic. Residues 205-225 (GSMVSTYQLIVTFGILMGNIL) traverse the membrane as a helical segment. Residues 226-243 (NFICERCYKDPTQNIAWQ) lie on the Extracellular side of the membrane. The chain crosses the membrane as a helical span at residues 244–264 (LPLFLGYIWAIIIGMSLVYVP). At 265-357 (ESPQYLAKIK…IMAFQQLSGI (93 aa)) the chain is on the cytoplasmic side. Residues 358-374 (NYFFYYGTSVFKGVGIK) traverse the membrane as a helical segment. At 375–380 (DPYITS) the chain is on the extracellular side. A helical transmembrane segment spans residues 381-398 (IILSSVNFLSTILGIYYV). The Cytoplasmic portion of the chain corresponds to 399–405 (EKWGHKT). Residues 406-426 (CLLYGSTNLLFYMMTYATVGT) traverse the membrane as a helical segment. Over 427–440 (FGRETDFSNIVLII) the chain is Extracellular. The helical transmembrane segment at 441-461 (VTCCFIFWFAITLGPVTFVLV) threads the bilayer. Over 462–478 (SELFPLRTRAISMAICT) the chain is Cytoplasmic. Residues 479–499 (FINWMFNFLISLLTPMIVSKI) traverse the membrane as a helical segment. Position 500 (aspartate 500) is a topological domain, extracellular. Residues 501 to 521 (FKLGYIFAACLLALIIFSWIL) traverse the membrane as a helical segment. Residues 522–540 (VPETRKKNEQEINKIFEPE) are Cytoplasmic-facing.

The protein belongs to the major facilitator superfamily. Sugar transporter (TC 2.A.1.1) family.

The protein localises to the membrane. Functionally, probable glucose transporter. The protein is Hexose transporter HXT14 (HXT14) of Saccharomyces cerevisiae (strain ATCC 204508 / S288c) (Baker's yeast).